The primary structure comprises 276 residues: MEPSTSTRKHFTINDFEIGRPLGRGKFGRVYLARLKENHFIVALKVLFKSEIEKEGLEHQLRREVEIQAHLQHRNILRLYNYFYDDTRIYLILEYAPGGELYKELQRHQKLDQQRTATIIQELSDALTYCHEKKVIHRDIKPENLLLGLNGEVKISDFGWSVHTPSLRRKTMCGTLDYLPPEMIAQKPYNEMVDLWCIGVLCYELLVGKPPFESSTSSETYRRIRQVDFKFPSSVPAGAQDLISKLLRYHPSERLSLAQVLKHPWVREHSRRVLPC.

Residues 16–266 enclose the Protein kinase domain; that stretch reads FEIGRPLGRG…LAQVLKHPWV (251 aa). ATP-binding positions include 22–30 and lysine 45; that span reads LGRGKFGRV. Aspartate 139 serves as the catalytic Proton acceptor. Threonine 171 carries the post-translational modification Phosphothreonine; by PKA.

This sequence belongs to the protein kinase superfamily. Ser/Thr protein kinase family. Aurora subfamily. As to quaternary structure, component of the chromosomal passenger complex (CPC) composed of at least BIRC5/survivin, CDCA8/borealin, INCENP, AURKB or AURKC; predominantly independent AURKB- and AURKC-containing complexes exist; in the complex interacts directly with BIRC5/survivin and INCENP. Interacts with TACC1. In terms of tissue distribution, expressed only in testis.

It is found in the nucleus. It localises to the chromosome. Its subcellular location is the centromere. The protein localises to the cytoplasm. The protein resides in the cytoskeleton. It is found in the spindle. It catalyses the reaction L-seryl-[protein] + ATP = O-phospho-L-seryl-[protein] + ADP + H(+). The catalysed reaction is L-threonyl-[protein] + ATP = O-phospho-L-threonyl-[protein] + ADP + H(+). Its activity is regulated as follows. Okadaic acid, an inhibitor of protein phosphatase 1 (PP1), protein phosphatase 2A (PP2A) and protein phosphatase 5 (PP5), increases AURKC activity. AURKC is also stabilized through its interaction with INCENP, which also acts as an activator. Serine/threonine-protein kinase component of the chromosomal passenger complex (CPC), a complex that acts as a key regulator of mitosis. The CPC complex has essential functions at the centromere in ensuring correct chromosome alignment and segregation and is required for chromatin-induced microtubule stabilization and spindle assembly. Also plays a role in meiosis and more particularly in spermatogenesis. Has redundant cellular functions with AURKB and can rescue an AURKB knockdown. Like AURKB, AURKC phosphorylates histone H3 at 'Ser-10' and 'Ser-28'. AURKC phosphorylates the CPC complex subunits BIRC5/survivin and INCENP leading to increased AURKC activity. Phosphorylates TACC1, another protein involved in cell division, at 'Ser-228'. The chain is Aurora kinase C (Aurkc) from Mus musculus (Mouse).